A 266-amino-acid chain; its full sequence is Trehalose-6-phosphate phosphatase (266 aa).

The active-site Nucleophile is the Asp-20. Mg(2+)-binding residues include Asp-20, Asp-22, and Asp-198. Residue 20-22 (DLD) participates in substrate binding.

The protein belongs to the trehalose phosphatase family. The cofactor is Mg(2+). Mn(2+) is required as a cofactor. It depends on Co(2+) as a cofactor. Requires Zn(2+) as cofactor.

The enzyme catalyses alpha,alpha-trehalose 6-phosphate + H2O = alpha,alpha-trehalose + phosphate. The protein operates within glycan biosynthesis; trehalose biosynthesis. In terms of biological role, removes the phosphate from trehalose 6-phosphate (Tre6P) to produce free trehalose. Also catalyzes the dephosphorylation of glucose-6-phosphate (Glu6P) and 2-deoxyglucose-6-phosphate (2dGlu6P). The polypeptide is Trehalose-6-phosphate phosphatase (otsB) (Escherichia coli (strain K12)).